The primary structure comprises 212 residues: Response regulator SsrB (212 aa).

The interval 1 to 138 is required for prevention of DNA binding in absence of phosphorylation and for full stimulation of activity by acidic pH; that stretch reads MKEYKILLVD…PTLNREAILA (138 aa). The region spanning 5 to 121 is the Response regulatory domain; the sequence is KILLVDDHEI…VLLAALQTVA (117 aa). Asp-56 is subject to 4-aspartylphosphate. Positions 143–208 constitute an HTH luxR-type domain; it reads DTTNHQLLTL…ELLNCARRMR (66 aa). The segment at residues 167–186 is a DNA-binding region (H-T-H motif); that stretch reads NHGISEKLHISIKTVETHRM. Cys-203 is subject to S-nitrosocysteine.

Homodimer; disulfide-linked; dimerizes upon DNA-binding. SsrB phosphorylated on Asp-56 activates the expression of virulence genes whereas the unphosphorylated form controls biofilm formation. Independently of SsrA, can be phosphorylated by small inorganic phosphate donors (such as acetyl phosphate or phosphoramidate). Post-translationally, disulfide bond formation at Cys-203 is not required for dimerization. In terms of processing, cys-203 may serve as a redox sensor that is nitrosylated in presence of reactive nitrogen species (RNS) generated by the host, the modification modulates its DNA-binding activity. Cys-203 is relatively resistant to oxidation by hydrogen peroxide.

Its subcellular location is the cytoplasm. Member of the two-component regulatory system SsrA/SsrB (SpiR/SsrB) that is required for intracellular proliferation and systemic dissemination within the host. When inside acidic Salmonella-containing vesicles (SCV) within host cells the SsrA sensor kinase autophosphorylates and the phosphoryl group is transferred to the response regulator SsrB; phosphorylated SsrB activates the expression of genes encoding virulence proteins, including pathogenicity island 2 (SPI2) and other horizontally acquired genes, but also ancestral genes; it can stimulate gene expression both by recruiting RNA polymerase and by antagonizing the action of the transcriptional repressor hns (H-NS). Can also act independently of sensor kinase ssrA to support the dormant carrier state by directing the transcription of factors required for biofilm formation. DNA-binding is stimulated by acidic pH conditions, and binding promotes bending of DNA both upstream and downstream of binding sites. Binds a degenerate 18-basepair palindromic sequence with a 7-4-7 internal organization, and regulates gene expression from 86 operons. When phosphorylated, activates the transcription of the ABC transporter complex dalSTUV, which helps protect the organism from oxidative killing by host neutrophils. Binds the phoP promoter to stimulate expression in acidic pH conditions. Antagonizes hns to activate the transcription of ugtL. Following invasion of host cells, binds the hilD and hilA regulatory regions to repress their transcription and consequently to repress transcription of pathogenicity island 1 (SPI1) encoding genes involved in host cell invasion. Binds the promoters of the flagellar master regulators flhD and flhC to repress their expression and consequently to suppress flagellar motility and promote evasion of the host inflammasome during infection of host cells. Activates expression of sseI/srfH, sifA, sifB, sseJ and regulates its own expression. When unphosphorylated, relieves the hns-mediated repression of master biofilm regulator csgD by binding and bending the csgD regulatory region. May act as early as in the lumen of the host small intestine, to activate the expression of virulence proteins prior to invasion of host cells. The sequence is that of Response regulator SsrB from Salmonella typhimurium (strain LT2 / SGSC1412 / ATCC 700720).